We begin with the raw amino-acid sequence, 432 residues long: Adenylosuccinate synthetase (432 aa).

Residues 12 to 18 (GDEGKGK) and 40 to 42 (GHT) contribute to the GTP site. The active-site Proton acceptor is Asp-13. The Mg(2+) site is built by Asp-13 and Gly-40. IMP contacts are provided by residues 13–16 (DEGK), 38–41 (NAGH), Thr-132, Arg-146, Gln-226, Thr-241, and Arg-305. The active-site Proton donor is His-41. A substrate-binding site is contributed by 301–307 (VVTGRKR). GTP contacts are provided by residues Arg-307, 333–335 (KLD), and 415–417 (STS).

It belongs to the adenylosuccinate synthetase family. As to quaternary structure, homodimer. It depends on Mg(2+) as a cofactor.

It is found in the cytoplasm. It carries out the reaction IMP + L-aspartate + GTP = N(6)-(1,2-dicarboxyethyl)-AMP + GDP + phosphate + 2 H(+). It functions in the pathway purine metabolism; AMP biosynthesis via de novo pathway; AMP from IMP: step 1/2. In terms of biological role, plays an important role in the de novo pathway of purine nucleotide biosynthesis. Catalyzes the first committed step in the biosynthesis of AMP from IMP. The protein is Adenylosuccinate synthetase of Mesorhizobium japonicum (strain LMG 29417 / CECT 9101 / MAFF 303099) (Mesorhizobium loti (strain MAFF 303099)).